Here is a 159-residue protein sequence, read N- to C-terminus: MMKFFEYNWQVRDQWFTWCHQLTTEELLKNRLGGVENILYTLFHIIDVEYSWIRAIQGKEDIAVQFADYQTLNKVKSLSNTFRTEIIDVLQTHSDQIKDELVSVPWETGVLYTRDEILHHIIAHEIHHIGQLSVWARELKLSPVSASFIGRTLKPIHSY.

His44, His124, and His128 together coordinate a divalent metal cation.

This sequence belongs to the DinB family.

This is an uncharacterized protein from Bacillus subtilis (strain 168).